The sequence spans 126 residues: uncharacterized protein (126 aa).

The interval 83 to 126 (VPPPLDRSHESPEEFFPPQNRNRGGGPKAQIQRHPPEALEKTTH) is disordered. A compositionally biased stretch (basic and acidic residues) spans 116–126 (HPPEALEKTTH).

This is an uncharacterized protein from Galliformes (FAdV-1).